The primary structure comprises 274 residues: Large ribosomal subunit protein uL2 (274 aa).

2 disordered regions span residues 28–55 (APHA…RHVG) and 224–274 (VAMN…RRRK).

This sequence belongs to the universal ribosomal protein uL2 family. As to quaternary structure, part of the 50S ribosomal subunit. Forms a bridge to the 30S subunit in the 70S ribosome.

Its function is as follows. One of the primary rRNA binding proteins. Required for association of the 30S and 50S subunits to form the 70S ribosome, for tRNA binding and peptide bond formation. It has been suggested to have peptidyltransferase activity; this is somewhat controversial. Makes several contacts with the 16S rRNA in the 70S ribosome. The polypeptide is Large ribosomal subunit protein uL2 (Pseudomonas putida (strain ATCC 47054 / DSM 6125 / CFBP 8728 / NCIMB 11950 / KT2440)).